A 330-amino-acid chain; its full sequence is MKKSFIHQQEEISFVKNTFTQYLKDKLEVVEVQGPILSKVGDGMQDNLSGVENPVSVKVLQIPDATYEVVHSLAKWKRHTLARFGFGEGEGLFVHMKALRPDEDSLDATHSVYVDQWDWEKVIPNGKRNIVYLKETVEKIYKAIRLTELAVEARYDIESILPKQITFIHTEELVERYPDLTPKERENAICKEFGAVFLIGIGGELPDGKPHDGRAPDYDDWTSESENGYKGLNGDILVWNESLGGAFELSSMGIRVDEETLRRQVEITGDEDRLELEWHKSLLNGLFPLTIGGGIGQSRMAMFLLRKRHIGEVQTSVWPQEVRDTYENIL.

This sequence belongs to the class-II aminoacyl-tRNA synthetase family. AsnA subfamily.

It localises to the cytoplasm. It carries out the reaction L-aspartate + NH4(+) + ATP = L-asparagine + AMP + diphosphate + H(+). It functions in the pathway amino-acid biosynthesis; L-asparagine biosynthesis; L-asparagine from L-aspartate (ammonia route): step 1/1. The protein is Aspartate--ammonia ligase of Streptococcus pneumoniae serotype 19F (strain G54).